The chain runs to 209 residues: Mitotic spindle checkpoint protein MAD2 (209 aa).

An HORMA domain is found at histidine 15 to valine 198.

This sequence belongs to the MAD2 family. As to quaternary structure, part of the mitotic checkpoint complex (MCC); interacts with MAD1, CDC20-1, CDC20-2 and CDC20-5. Interacts with BUBR1 at chromocenters and with BUB3.1. Interacts with EIF4B3. Expressed in actively dividing tissues, early in organ development, in young leaves, lateral root primordia and root meristems.

The protein localises to the nucleus. It is found in the nucleus envelope. Its subcellular location is the chromosome. The protein resides in the centromere. It localises to the kinetochore. The protein localises to the cytoplasm. It is found in the cytoskeleton. Its subcellular location is the spindle. Functionally, required for the execution of the mitotic checkpoint which monitors the process of kinetochore-spindle attachment and delays the onset of anaphase when this process is not complete. It inhibits the activity of the anaphase promoting complex by sequestering CDC20 until all chromosomes are aligned at the metaphase plate. The polypeptide is Mitotic spindle checkpoint protein MAD2 (Arabidopsis thaliana (Mouse-ear cress)).